Reading from the N-terminus, the 128-residue chain is Transcription antitermination protein NusB (128 aa).

This sequence belongs to the NusB family.

Its function is as follows. Involved in transcription antitermination. Required for transcription of ribosomal RNA (rRNA) genes. Binds specifically to the boxA antiterminator sequence of the ribosomal RNA (rrn) operons. This Listeria monocytogenes serotype 4a (strain HCC23) protein is Transcription antitermination protein NusB.